The sequence spans 169 residues: PTS system glucose-specific EIIA component (169 aa).

The region spanning Asp-39–Asn-143 is the PTS EIIA type-1 domain. Zn(2+) contacts are provided by His-76 and His-91. His-91 serves as the catalytic Tele-phosphohistidine intermediate; for EIIA activity. Phosphohistidine; by HPr is present on His-91.

As to quaternary structure, heterodimer with glycerol kinase (glpk). It depends on Zn(2+) as a cofactor.

It is found in the cytoplasm. In terms of biological role, the phosphoenolpyruvate-dependent sugar phosphotransferase system (sugar PTS), a major carbohydrate active transport system, catalyzes the phosphorylation of incoming sugar substrates concomitantly with their translocation across the cell membrane. The enzyme II complex composed of PtsG and Crr is involved in glucose transport. This is PTS system glucose-specific EIIA component (crr) from Escherichia coli O6:H1 (strain CFT073 / ATCC 700928 / UPEC).